Here is a 484-residue protein sequence, read N- to C-terminus: Threonine synthase-like 2 (484 aa).

Residue Lys113 is modified to N6-(pyridoxal phosphate)lysine.

Belongs to the threonine synthase family. Pyridoxal 5'-phosphate is required as a cofactor.

It localises to the secreted. Its function is as follows. Acts as a catabolic phospho-lyase on both gamma- and beta-phosphorylated substrates. Degrades O-phospho-threonine (PThr) to alpha-ketobutyrate, ammonia and phosphate. Functionally, potent inducer of osteoblastic production of IL6. May act to exacerbate inflammation and/or bone turnover under inflammatory conditions. This chain is Threonine synthase-like 2 (THNSL2), found in Homo sapiens (Human).